Reading from the N-terminus, the 173-residue chain is Transcription factor E (173 aa).

An HTH TFE/IIEalpha-type domain is found at 3 to 86 (DDPLVKSLLT…SWKFEEQEVI (84 aa)).

The protein belongs to the TFE family. In terms of assembly, monomer. Interaction with RNA polymerase subunits RpoF and RpoE is necessary for Tfe stimulatory transcription activity. Able to interact with Tbp and RNA polymerase in the absence of DNA promoter. Interacts both with the preinitiation and elongation complexes.

Transcription factor that plays a role in the activation of archaeal genes transcribed by RNA polymerase. Facilitates transcription initiation by enhancing TATA-box recognition by TATA-box-binding protein (Tbp), and transcription factor B (Tfb) and RNA polymerase recruitment. Not absolutely required for transcription in vitro, but particularly important in cases where Tbp or Tfb function is not optimal. It dynamically alters the nucleic acid-binding properties of RNA polymerases by stabilizing the initiation complex and destabilizing elongation complexes. Seems to translocate with the RNA polymerase following initiation and acts by binding to the non template strand of the transcription bubble in elongation complexes. This chain is Transcription factor E, found in Methanobrevibacter smithii (strain ATCC 35061 / DSM 861 / OCM 144 / PS).